The primary structure comprises 139 residues: MLIPKRTKYRKQHRPVRSGMSKGGNEINFGDFAIQSLAPAYVTNRQIEAARIAMTRYIKRGGRVWITIFPDRPLTKHPLGARMGSGKGAPEFWIANVRPGRVMFEIGGVSEDIAKEALRRAIDKLPMKCRIIAREGGDI.

A compositionally biased stretch (basic residues) spans 1-16 (MLIPKRTKYRKQHRPV). Positions 1–22 (MLIPKRTKYRKQHRPVRSGMSK) are disordered.

The protein belongs to the universal ribosomal protein uL16 family. As to quaternary structure, part of the 50S ribosomal subunit.

In terms of biological role, binds 23S rRNA and is also seen to make contacts with the A and possibly P site tRNAs. In Bifidobacterium longum (strain DJO10A), this protein is Large ribosomal subunit protein uL16.